We begin with the raw amino-acid sequence, 110 residues long: Small heat shock protein hspG11 (110 aa).

In terms of domain architecture, sHSP spans 30–110; sequence KTIIDILPPM…KSTSTSSTFR (81 aa). The tract at residues 78 to 110 is disordered; the sequence is KDLNKQHNNNNNNNNNNNNLVIEKSTSTSSTFR. Over residues 85 to 96 the composition is skewed to low complexity; it reads NNNNNNNNNNNN. Over residues 101 to 110 the composition is skewed to polar residues; it reads KSTSTSSTFR.

The protein belongs to the small heat shock protein (HSP20) family.

The protein is Small heat shock protein hspG11 (hspG11) of Dictyostelium discoideum (Social amoeba).